Reading from the N-terminus, the 212-residue chain is Thymidylate kinase (212 aa).

13–20 (GLEGAGKS) serves as a coordination point for ATP.

This sequence belongs to the thymidylate kinase family.

It catalyses the reaction dTMP + ATP = dTDP + ADP. Phosphorylation of dTMP to form dTDP in both de novo and salvage pathways of dTTP synthesis. This is Thymidylate kinase from Legionella pneumophila (strain Corby).